A 512-amino-acid polypeptide reads, in one-letter code: MLIGVPRELLENESRVAATPKTVQQILKLGFDVIVEHDAGFKASFEDQAFLEAGAKIGTSAEIWQSDIIFKVNAPTDEEIAQMKEGAALVSFIWRMQNPELMKKLTAKKINVLAMDAVPRISRAQALDALSSMANISGYRAVIEAAHEFGSFFTGQITAAGKVPPAKVLVIGAGVAGLAAIGAANSLGAIVRAFDSRPEVKEQVQSMGASFLEIDFKEEGGSGDGYAKVMSEEFNRRAMELYAEQAKEVDIIITTAAIPGKPAPRLITKEMVDSMKPGSVIVDLAAATGGNCEYTQAGKVVTTENQVKVIGYTDFPSRLPTQSSQLYGTNLVNLLKLLCKEKDGNINIDFEDVVLRGVTVVRDGEEIPPAQIQVSAQPKQETKAAPVAEKKESKPTDPRVKYGVMAGVGVLFLWLASVAPAAFLSHFTVFVLACVVGYYVVWNVSHALHTPLMAVTNAISGIIIVGALLQIRQPTGNLFIDALAFVAILVASINIFGGFRVTQRMLAMFRKG.

Topologically, residues 1 to 400 are cytoplasmic; it reads MLIGVPRELL…KESKPTDPRV (400 aa). Residues 125–128, Val-175, 195–197, and Gly-225 contribute to the NAD(+) site; these read QALD and DSR. The disordered stretch occupies residues 375-394; that stretch reads SAQPKQETKAAPVAEKKESK. 2 consecutive transmembrane segments (helical) span residues 401–421 and 422–442; these read KYGV…VAPA and AFLS…YVVW. The Cytoplasmic segment spans residues 443–451; the sequence is NVSHALHTP. A helical membrane pass occupies residues 452 to 472; the sequence is LMAVTNAISGIIIVGALLQIR. Over 473-478 the chain is Periplasmic; it reads QPTGNL. Residues 479 to 499 traverse the membrane as a helical segment; the sequence is FIDALAFVAILVASINIFGGF. Residues 500–512 lie on the Cytoplasmic side of the membrane; it reads RVTQRMLAMFRKG.

Belongs to the AlaDH/PNT family. In terms of assembly, heterodimer of an alpha (PntA) and a beta (PntB) chain.

Its subcellular location is the cell inner membrane. The enzyme catalyses NAD(+) + NADPH + H(+)(in) = NADH + NADP(+) + H(+)(out). In terms of biological role, the transhydrogenation between NADH and NADP is coupled to respiration and ATP hydrolysis and functions as a proton pump across the membrane. This Haemophilus influenzae (strain ATCC 51907 / DSM 11121 / KW20 / Rd) protein is NAD(P) transhydrogenase subunit alpha (pntA).